We begin with the raw amino-acid sequence, 180 residues long: NAD(P)H-quinone oxidoreductase subunit I, chloroplastic (180 aa).

4Fe-4S ferredoxin-type domains follow at residues Gly55 to Arg84 and Leu95 to Glu124. Cys64, Cys67, Cys70, Cys74, Cys104, Cys107, Cys110, and Cys114 together coordinate [4Fe-4S] cluster.

This sequence belongs to the complex I 23 kDa subunit family. NDH is composed of at least 16 different subunits, 5 of which are encoded in the nucleus. [4Fe-4S] cluster is required as a cofactor.

The protein localises to the plastid. It is found in the chloroplast thylakoid membrane. It carries out the reaction a plastoquinone + NADH + (n+1) H(+)(in) = a plastoquinol + NAD(+) + n H(+)(out). The enzyme catalyses a plastoquinone + NADPH + (n+1) H(+)(in) = a plastoquinol + NADP(+) + n H(+)(out). In terms of biological role, NDH shuttles electrons from NAD(P)H:plastoquinone, via FMN and iron-sulfur (Fe-S) centers, to quinones in the photosynthetic chain and possibly in a chloroplast respiratory chain. The immediate electron acceptor for the enzyme in this species is believed to be plastoquinone. Couples the redox reaction to proton translocation, and thus conserves the redox energy in a proton gradient. The polypeptide is NAD(P)H-quinone oxidoreductase subunit I, chloroplastic (Chloranthus spicatus (Chulantree)).